The primary structure comprises 983 residues: 3',5'-cyclic-AMP phosphodiesterase, isoforms N/G (983 aa).

Disordered stretches follow at residues 31-333, 349-370, 400-429, and 528-566; these read MPEG…SAGL, SDSD…ASES, VPAS…LSQG, and SAGQ…RLPT. Positions 35-50 are enriched in basic and acidic residues; the sequence is GEDHRGDLNQKGENNN. The span at 51–60 shows a compositional bias: polar residues; the sequence is RPRPSISLAN. A compositionally biased stretch (gly residues) spans 84 to 97; it reads SVGGGDSDGGGEAI. Low complexity-rich tracts occupy residues 112–121 and 145–167; these read LSTTTSNSSS and QLQQ…SQRS. Acidic residues predominate over residues 174–199; the sequence is AEGEEFDVDPMDEDDEDQTYDRETEE. Low complexity-rich tracts occupy residues 219–234 and 248–261; these read SSLF…TTSS and AASI…SDLM. Composition is skewed to polar residues over residues 268–287, 358–368, and 401–419; these read STAT…SQRR, KSMSRNSSIAS, and PASN…SRSG. A PDEase domain is found at 569–898; that stretch reads VETPRENELG…DYYQSMIPPS (330 aa). Residue histidine 645 is the Proton donor of the active site. 645 to 649 contacts 3',5'-cyclic AMP; the sequence is HNSLH. Residues histidine 649, histidine 685, aspartate 686, and aspartate 803 each contribute to the a divalent metal cation site. Positions 686, 803, and 854 each coordinate 3',5'-cyclic AMP. The segment covering 920–937 has biased composition (acidic residues); it reads EESDQENLAELEEGDESG. The disordered stretch occupies residues 920–983; the sequence is EESDQENLAE…CQNQPQHGGM (64 aa). Over residues 938-955 the composition is skewed to low complexity; sequence GESTTTGTTGTTAASALS. Residues 956–967 are compositionally biased toward gly residues; the sequence is GAGGGGGGGGGM. A compositionally biased stretch (polar residues) spans 973 to 983; sequence GCQNQPQHGGM.

The protein belongs to the cyclic nucleotide phosphodiesterase family. PDE4 subfamily. As to quaternary structure, monomer. It depends on a divalent metal cation as a cofactor.

It carries out the reaction 3',5'-cyclic AMP + H2O = AMP + H(+). The protein operates within purine metabolism; 3',5'-cyclic AMP degradation; AMP from 3',5'-cyclic AMP: step 1/1. Functionally, hydrolyzes the second messenger cAMP, which is a key regulator of many important physiological processes. Vital for female fertility. Required for learning/memory. This is 3',5'-cyclic-AMP phosphodiesterase, isoforms N/G from Drosophila melanogaster (Fruit fly).